The sequence spans 1478 residues: ATP-binding cassette transporter abc2 (1478 aa).

At 1-25 (MVLEQDLDPFVGGNWMNSAYKGFTF) the chain is on the vacuolar side. Residues 26–46 (LSATWLAPNIYLLISGCLQYF) form a helical membrane-spanning segment. At 47-65 (YEVRKRSHYFHFRRFWTIW) the chain is on the cytoplasmic side. Residues 66 to 85 (LKSLVIMVLLFTHIYDCYKT) traverse the membrane as a helical segment. Asn-86 carries N-linked (GlcNAc...) asparagine glycosylation. Topologically, residues 86-90 (NESVW) are vacuolar. Residues 91–104 (NVLSIITYFLALFL) form a helical membrane-spanning segment. Residues 105–116 (HVVEQPTLRIPM) are Cytoplasmic-facing. A helical membrane pass occupies residues 117–137 (ASLLMFWLFKFLASALVLLLR). The Vacuolar portion of the chain corresponds to 138–154 (PNYTMFPMLNVVPSITF). Asn-139 carries N-linked (GlcNAc...) asparagine glycosylation. The chain crosses the membrane as a helical span at residues 155–175 (FCSLVCLLAEIYVPPANRVWY). At 176–259 (PDDAAELEET…KKSSLYMWGV (84 aa)) the chain is on the cytoplasmic side. The helical transmembrane segment at 260 to 280 (LFLNHWKLTVVIIVLKLVQDV) threads the bilayer. Positions 268–557 (TVVIIVLKLV…LPIVVSSVLE (290 aa)) constitute an ABC transmembrane type-1 1 domain. Residues 281-310 (VAFIQPNLIRKIVIFVSSYSSEHPQPPQVG) lie on the Vacuolar side of the membrane. Residues 311–331 (FSLAIAMFLTNVVQTALLQQY) form a helical membrane-spanning segment. The Cytoplasmic portion of the chain corresponds to 332–387 (FQLGMVLGMRWRSELITAIYRKSLRLSSAARQSRSVGDIVNYMSVDTQKVCDLTMF). Residues 388–408 (LFVIVSGPFQIVLALTNLYHL) traverse the membrane as a helical segment. Residues 409–411 (VGY) lie on the Vacuolar side of the membrane. Residues 412 to 432 (GALSGAFVTFLLFPCNVVIAS) form a helical membrane-spanning segment. Topologically, residues 433 to 495 (IFKRFQNRQM…MLKKIGIVNT (63 aa)) are cytoplasmic. Residues 496-516 (IGNFTWLFAPILVSAATFGTF) form a helical membrane-spanning segment. Residues 517 to 539 (IVLYGKTRVLSVDIVFACLSLFN) lie on the Vacuolar side of the membrane. A helical transmembrane segment spans residues 540 to 560 (LLQFPLTMLPIVVSSVLEASV). At 561-910 (AISRIYGFLT…VKWKVYWTYF (350 aa)) the chain is on the cytoplasmic side. The 229-residue stretch at 593-821 (LEIKKGTFSW…PDSQLFQLLS (229 aa)) folds into the ABC transporter 1 domain. An ATP-binding site is contributed by 631–638 (GKVGMGKS). The interval 828–867 (TASSTGADTPLSRSQSVITSSTDVTSSASRSSDTVSNYPK) is disordered. Polar residues predominate over residues 829-840 (ASSTGADTPLSR). A phosphoserine mark is found at Ser-839, Ser-843, and Ser-863. Positions 841-863 (SQSVITSSTDVTSSASRSSDTVS) are enriched in low complexity. Residues 911-931 (KACSLFLIFLYFLFIIGGIGM) traverse the membrane as a helical segment. An ABC transmembrane type-1 2 domain is found at 918–1202 (IFLYFLFIIG…VVRQSVDVET (285 aa)). The Vacuolar portion of the chain corresponds to 932–968 (NVGTNVWLKHWSEVNTQLGYNPKPYFYLGIYTLFGLL). Residues 969 to 990 (SCALISLSSLTITVFCAIKSCR) traverse the membrane as a helical segment. Residues 991–1033 (YLHDSMVKAVLRAPMSFFETTPTGRILNRFSSDVYRVDEVISR) lie on the Cytoplasmic side of the membrane. Residues 1034-1054 (VFMFFFRNLFQIVFVLAVICY) traverse the membrane as a helical segment. A topological domain (vacuolar) is located at residue Ser-1055. Residues 1056–1076 (SPMFMILIVPLFFLYRYNQVY) form a helical membrane-spanning segment. Residues 1077-1147 (YTQTSRELKR…SSNRWQAIRV (71 aa)) are Cytoplasmic-facing. Residues 1148 to 1168 (EAIGALVVFSSAFFGVLSAVR) traverse the membrane as a helical segment. The Vacuolar segment spans residues 1169 to 1172 (GNPN). Residues 1173–1193 (SGLVGLSLSYAVQITQSLTFV) form a helical membrane-spanning segment. Residues 1194 to 1478 (VRQSVDVETN…YSLAKESGLI (285 aa)) lie on the Cytoplasmic side of the membrane. In terms of domain architecture, ABC transporter 2 spans 1239–1473 (IKFDHYSVRY…KASLFYSLAK (235 aa)). 1273 to 1280 (GRTGAGKS) lines the ATP pocket.

It belongs to the ABC transporter superfamily. ABCC family. Conjugate transporter (TC 3.A.1.208) subfamily.

It is found in the vacuole membrane. In terms of biological role, involved in vacuolar sequestration of glutathione S-conjugates. Together with abc4, required for accumulation of a red pigment (ade pigment) in the vacuole of a mutant affected in the adenine biosynthetic pathway. This chain is ATP-binding cassette transporter abc2 (abc2), found in Schizosaccharomyces pombe (strain 972 / ATCC 24843) (Fission yeast).